The following is a 316-amino-acid chain: MWLYLVALVGLWTLLRFFRERQVVSHLQDKYVFITGCDSGFGNLLARQLDRRGMRVLAACLTEKGAEQLRNKTSDRLETVILDVTKTESIVAATQWVKERVGNRGLWGLVNNAGICVFAINEWLKKEDFANILDVNLLGMIEVTLSMLPLVRKARGRVVNISSSMGRVSLCGGGYCISKYGVEAFSDSLRREISYFGVKVAIIEPGGFRTNVSNYERLSHSIEKLWDQTSSEVKEVYDKNFLDSYIKAIQSLTDTCSDDLSVVTDCMEHALTACHPRTRYSAGWDAKLFYLPLSYMPTFLVDAMLYWSSVKPAQAL.

33 to 57 (FITGCDSGFGNLLARQLDRRGMRVL) is an NADP(+) binding site. Residue Ser163 participates in substrate binding. Catalysis depends on Tyr175, which acts as the Proton acceptor.

This sequence belongs to the short-chain dehydrogenases/reductases (SDR) family. Highly expressed in liver. Also expressed in lung, eye, kidney, and brain.

It is found in the microsome. It localises to the endoplasmic reticulum. The enzyme catalyses all-trans-retinol--[retinol-binding protein] + NAD(+) = all-trans-retinal--[retinol-binding protein] + NADH + H(+). It participates in cofactor metabolism; retinol metabolism. In terms of biological role, acts on androgens and retinols, i.e. has steroid 3-alpha- and 17-beta-dehydrogenase and cis/trans-retinol catalytic activities. The protein is Retinol dehydrogenase 7 (Rdh7) of Mus musculus (Mouse).